Here is a 199-residue protein sequence, read N- to C-terminus: Holliday junction branch migration complex subunit RuvA (199 aa).

The tract at residues 1–63 is domain I; it reads MIGCLIGEVF…EDAQQLYGFS (63 aa). The segment at 64–142 is domain II; it reads DAQEKTIFRT…TLAQGTSSAA (79 aa). Residues 143 to 150 form a flexible linker region; the sequence is ALPQIQFV. The interval 150–199 is domain III; the sequence is VSNSPVAEAEAALQSLGYKPLEAQKAVAAVKADYTESADIIRAALKSMMK.

The protein belongs to the RuvA family. As to quaternary structure, homotetramer. Forms an RuvA(8)-RuvB(12)-Holliday junction (HJ) complex. HJ DNA is sandwiched between 2 RuvA tetramers; dsDNA enters through RuvA and exits via RuvB. An RuvB hexamer assembles on each DNA strand where it exits the tetramer. Each RuvB hexamer is contacted by two RuvA subunits (via domain III) on 2 adjacent RuvB subunits; this complex drives branch migration. In the full resolvosome a probable DNA-RuvA(4)-RuvB(12)-RuvC(2) complex forms which resolves the HJ.

Its subcellular location is the cytoplasm. Functionally, the RuvA-RuvB-RuvC complex processes Holliday junction (HJ) DNA during genetic recombination and DNA repair, while the RuvA-RuvB complex plays an important role in the rescue of blocked DNA replication forks via replication fork reversal (RFR). RuvA specifically binds to HJ cruciform DNA, conferring on it an open structure. The RuvB hexamer acts as an ATP-dependent pump, pulling dsDNA into and through the RuvAB complex. HJ branch migration allows RuvC to scan DNA until it finds its consensus sequence, where it cleaves and resolves the cruciform DNA. The protein is Holliday junction branch migration complex subunit RuvA of Acinetobacter baumannii (strain SDF).